Reading from the N-terminus, the 398-residue chain is Nocardicin C N-oxygenase (398 aa).

A disordered region spans residues 63-90; sequence RARAAGREETPRVTPEAAPAGSMLSMDP. The heme site is built by His-93, Arg-97, Arg-289, His-345, and Cys-347.

Belongs to the cytochrome P450 family. Requires heme as cofactor.

It carries out the reaction nocardicin C + 4 reduced [2Fe-2S]-[ferredoxin] + 2 O2 + 2 H(+) = nocardicin A + 4 oxidized [2Fe-2S]-[ferredoxin] + 3 H2O. Its pathway is antibiotic biosynthesis. Its function is as follows. Involved in the biosynthesis of the beta-lactam antibiotic nocardicin A. Catalyzes the conversion of nocardicin C to nocardicin A. Cannot use nocardicin G. The sequence is that of Nocardicin C N-oxygenase from Nocardia uniformis subsp. tsuyamanensis.